We begin with the raw amino-acid sequence, 110 residues long: Phosphoribosyl-ATP pyrophosphatase (110 aa).

Belongs to the PRA-PH family.

It is found in the cytoplasm. The catalysed reaction is 1-(5-phospho-beta-D-ribosyl)-ATP + H2O = 1-(5-phospho-beta-D-ribosyl)-5'-AMP + diphosphate + H(+). The protein operates within amino-acid biosynthesis; L-histidine biosynthesis; L-histidine from 5-phospho-alpha-D-ribose 1-diphosphate: step 2/9. This is Phosphoribosyl-ATP pyrophosphatase from Pseudomonas savastanoi pv. phaseolicola (strain 1448A / Race 6) (Pseudomonas syringae pv. phaseolicola (strain 1448A / Race 6)).